Consider the following 284-residue polypeptide: Isopentenyl-diphosphate Delta-isomerase II, chloroplastic (284 aa).

A chloroplast-targeting transit peptide spans 1–45 (MSASSLFNLPLIRLRSLALSSSFSSFRFAHRPLSSISPRKLPNFR). N-acetylalanine is present on A46. K88 contacts substrate. Mg(2+) contacts are provided by H92 and H104. The 153-residue stretch at 102 to 254 (LLHRAFSVFL…GLKLSPWFRL (153 aa)) folds into the Nudix hydrolase domain. Substrate-binding residues include R123 and K127. C139 is an active-site residue. S140 is a binding site for substrate. A Nudix box motif is present at residues 140–170 (SHPLYRESELIQDNALGVRNAAQRKLLDELG). Residues E199 and E201 each coordinate Mg(2+). The active site involves E201.

Belongs to the IPP isomerase type 1 family. It depends on Mg(2+) as a cofactor.

The protein localises to the plastid. It localises to the chloroplast. It carries out the reaction isopentenyl diphosphate = dimethylallyl diphosphate. Its pathway is isoprenoid biosynthesis; dimethylallyl diphosphate biosynthesis; dimethylallyl diphosphate from isopentenyl diphosphate: step 1/1. It participates in porphyrin-containing compound metabolism; chlorophyll biosynthesis. In terms of biological role, catalyzes the 1,3-allylic rearrangement of the homoallylic substrate isopentenyl (IPP) to its highly electrophilic allylic isomer, dimethylallyl diphosphate (DMAPP). The polypeptide is Isopentenyl-diphosphate Delta-isomerase II, chloroplastic (IPP2) (Arabidopsis thaliana (Mouse-ear cress)).